Here is a 193-residue protein sequence, read N- to C-terminus: Small COPII coat GTPase SAR1 (193 aa).

The STAR; SAR1-N-terminal activation recruitment. Required for the activation and subsequent recruitment to ER membrane motif lies at Phe3–Trp5. Residues Val11–Leu15 form a mediates recruitment to ER membranes region. Asp30 lines the Mg(2+) pocket. GDP contacts are provided by Asn31, Ala32, Gly33, Lys34, Thr35, and Thr36. Asn31 lines the GTP pocket. Positions 33, 34, 35, and 36 each coordinate GTP. Asp71 contacts Mg(2+). GDP-binding residues include Asn130, Lys131, Asp133, Val176, and Leu177. GTP contacts are provided by Asn130, Lys131, Asp133, Val176, and Leu177.

The protein belongs to the small GTPase superfamily. SAR1 family. As to quaternary structure, homodimer; upon association with membrane. Part of the coat protein complex II/COPII, composed of SEC23/24 and SEC13/31 heterodimers, that it helps recruit and assemble on endoplasmic reticulum (ER) membranes at ER exit sites.

The protein resides in the endoplasmic reticulum membrane. Its subcellular location is the golgi apparatus. It is found in the golgi stack membrane. It localises to the cytoplasm. The protein localises to the cytosol. It carries out the reaction GTP + H2O = GDP + phosphate + H(+). With respect to regulation, small GTPases activation is mediated by guanine exchange factors (GEF), while inactivation through hydrolysis of the bound GTP is stimulated by GTPase activating proteins (GAP). Its function is as follows. Small GTPase that cycles between an active GTP-bound and an inactive GDP-bound state and mainly functions in vesicle-mediated endoplasmic reticulum (ER) to Golgi transport. The active GTP-bound form inserts into the endoplasmic reticulum membrane where it recruits the remainder of the coat protein complex II/COPII. The coat protein complex II assembling and polymerizing on endoplasmic reticulum membrane is responsible for both the sorting of cargos and the deformation and budding of membranes into vesicles destined to the Golgi. Plays a role in transporting the tyrosine kinase receptor let-23 from the endoplasmic reticulum to the plasma membrane of vulval precursor cells. This chain is Small COPII coat GTPase SAR1, found in Caenorhabditis elegans.